The following is a 654-amino-acid chain: Marinolic acid--CoA ligase (654 aa).

This sequence belongs to the ATP-dependent AMP-binding enzyme family.

The enzyme catalyses ATP + a marinolic acid + CoA = AMP + diphosphate + a marinoloyl-CoA.. It catalyses the reaction ATP + a pseudomonic acid + CoA = AMP + diphosphate + a pseudomonoyl-CoA.. It carries out the reaction marinolate C + ATP + CoA = marinoloyl-CoA C + AMP + diphosphate. The catalysed reaction is pseudomonate C + ATP + CoA = pseudomonoyl-CoA C + AMP + diphosphate. It functions in the pathway antibiotic biosynthesis. In terms of biological role, acyl-CoA ligase that catalyzes the CoA acylation of pseudomonate C, leading to the formation of pseudomonoyl-CoA C (PAC-CoA). Also shows high activity with pseudomonoyl-CoA A as substrate. In addition, can activate acetic, octanoic, 2,4-dodecadienoic and 2,4-decadienoic acids, although with much lower activity. In vivo, is probably involved in the biosynthesis of thiomarinol, a naturally occurring double-headed antibiotic. The chain is Marinolic acid--CoA ligase from Pseudoalteromonas sp. (strain SANK 73390).